The chain runs to 2004 residues: Histone acetyltransferase KAT6A (2004 aa).

The SAMD1-like winged helix (WH) domain maps to 1 to 77 (MVKLANPLYT…LNSYKDPDNP (77 aa)). A required for activation of RUNX1-1 region spans residues 1–144 (MVKLANPLYT…FGGSAASGFH (144 aa)). Residues 52–166 (ELSVKDGTIL…HGRLLKDGPL (115 aa)) are required for nuclear localization. One can recognise an H15 domain in the interval 95–171 (QNVDWNKLIK…KDGPLYRLNT (77 aa)). Positions 144 to 664 (HQQLRLAIKR…RKGYGRFLID (521 aa)) are interaction with PML. At Lys-172 the chain carries N6-acetyllysine. 2 consecutive PHD-type zinc fingers follow at residues 206 to 265 (IPIC…CKTC) and 259 to 313 (CIEC…CRPR). An interaction with RUNX1-1 region spans residues 312-664 (PRKKGRKLLQ…RKGYGRFLID (353 aa)). Residues 334–375 (PIGRPKNRLKKQNTVSKGPFSKVRTGPGRGRKRKITLSSQSA) form a disordered region. N6-acetyllysine is present on residues Lys-350 and Lys-355. The residue at position 369 (Thr-369) is a Phosphothreonine; by PKB/AKT1. Ser-420 bears the Phosphoserine mark. Residues 441–464 (KRGNRKSSTSDWPTDNQDGWDGKQ) form a disordered region. The segment covering 446-457 (KSSTSDWPTDNQ) has biased composition (polar residues). Ser-473 is subject to Phosphoserine. Residues 488–778 (IQEQALQKVG…VDPECLRWTP (291 aa)) form a catalytic region. The MYST-type HAT domain maps to 504–778 (PQVRCPSVIE…VDPECLRWTP (275 aa)). Residues 507–810 (RCPSVIEFGK…EPQCQERELE (304 aa)) form a mediates interaction with BRPF1, required for histone H3 acetyltransferase activity region. A C2HC MYST-type zinc finger spans residues 537-562 (LYLCEFCLKYMKSRTILQQHMKKCGW). An N6-acetyllysine; by autocatalysis modification is found at Lys-604. Acetyl-CoA-binding positions include 645–649 (SCIMI) and 654–660 (QRKGYGR). Glu-680 acts as the Proton donor/acceptor in catalysis. Ser-684 serves as a coordination point for acetyl-CoA. 3 disordered regions span residues 785–1445 (VVSE…AYQD), 1461–1621 (QADE…MMQQ), and 1637–1721 (SCVV…MEIP). Ser-787 and Ser-812 each carry phosphoserine. Residues 787–803 (SEEEEEEAEEGENEEPQ) are compositionally biased toward acidic residues. At Lys-815 the chain carries N6-acetyllysine. Residues 817–836 (VSHENKEQDSYSVESEKKPE) are compositionally biased toward basic and acidic residues. Residue Lys-834 forms a Glycyl lysine isopeptide (Lys-Gly) (interchain with G-Cter in SUMO2) linkage. Over residues 864–873 (RRGRWGRKNR) the composition is skewed to basic residues. A compositionally biased stretch (basic and acidic residues) spans 874–888 (KTQERFGDKDSKLLL). Residue Tyr-899 is modified to Phosphotyrosine. 2 stretches are compositionally biased toward basic and acidic residues: residues 931–942 (GKPDLPKRRLSE) and 953–980 (KSPEALKCRLTEGSERLPRRYSEGDRAV). 3 positions are modified to phosphoserine: Ser-941, Ser-954, and Ser-974. The residue at position 1007 (Lys-1007) is an N6-acetyllysine. Positions 1009 to 1030 (TLKRKKPFLHRRRRVRKRKHHN) are enriched in basic residues. Low complexity predominate over residues 1031 to 1042 (SSVVTETISETT). 2 stretches are compositionally biased toward acidic residues: residues 1043-1053 (EVLDEPFEDSD) and 1065-1078 (FEIDEEEEEEDENE). Residues Ser-1089, Ser-1090, and Ser-1113 each carry the phosphoserine modification. Over residues 1107–1118 (EEEDEESDDADD) the composition is skewed to acidic residues. Residues 1146 to 1172 (LKKKKGWPKGKSRKPIHWKKRPGRKPG) show a composition bias toward basic residues. Positions 1203–1223 (KIQESEETVEPKEDMPLPEER) are enriched in basic and acidic residues. Residues 1224 to 1245 (KEEEEMQAEAEEAEEGEEEDAA) are compositionally biased toward acidic residues. Over residues 1246-1262 (SSEVPAASPADSSNSPE) the composition is skewed to low complexity. Residues 1275–1287 (EKPRVSEEQRQSE) are compositionally biased toward basic and acidic residues. Acidic residues predominate over residues 1288 to 1305 (EEQQELEEPEPEEEEDAA). 3 stretches are compositionally biased toward basic and acidic residues: residues 1323–1345 (HLESTKKKELEEQPTREDVKEEP), 1358–1367 (KSREKIKDKE), and 1398–1420 (EDSHTKEELIELKEEEEIPHSEL). A Glycyl lysine isopeptide (Lys-Gly) (interchain with G-Cter in SUMO2) cross-link involves residue Lys-1342. Low complexity predominate over residues 1481 to 1503 (SPISSVQSHPSQSVRSVSSPNVP). Polar residues predominate over residues 1508–1529 (GYTQISPEQGSLSAPSMQNMET). Positions 1517-1642 (GSLSAPSMQN…KSPQSCVVER (126 aa)) are interaction with RUNX1-2. Positions 1517-1741 (GSLSAPSMQN…YERIPGDFGA (225 aa)) are interaction with PML. The segment covering 1534 to 1548 (DVPSVSDHSQQVVDS) has biased composition (low complexity). Over residues 1556 to 1573 (IESTTENYENPSSYDSTM) the composition is skewed to polar residues. Positions 1574 to 1621 (GGSICGNSSSQSSCSYGGLSSSSSLTQSSCVVTQQMASMGSSCSMMQQ) are enriched in low complexity. The span at 1650–1699 (QPPPPPPQQPQPPPPQPQPAPQPPPPQQQPQQQPQPQPQQPPPPPPPQQQ) shows a compositional bias: pro residues. Polar residues predominate over residues 1702–1712 (LSQCSMNNSFT). Positions 1913-1948 (SMNMNTLNAMNSYRMTQPMMNSSYHSNPAYMNQTAQ) are required for activation of RUNX1-2.

The protein belongs to the MYST (SAS/MOZ) family. As to quaternary structure, component of the MOZ/MORF complex composed at least of ING5, KAT6A, KAT6B, MEAF6 and one of BRPF1, BRD1/BRPF2 and BRPF3. Interacts with RUNX1; phosphorylation of RUNX1 enhances the interaction. Interacts with RUNX2. Interacts with p53/TP53. Interacts with PML (isoform PML-4) and this interaction positively regulates its acetylation activity towards p53/TP53. In terms of processing, autoacetylation at Lys-604 is required for proper function. Autoacetylated. Phosphorylation at Thr-369 by PKB/AKT1 inhibits its interaction with PML and negatively regulates its acetylation activity towards p53/TP53.

The protein localises to the nucleus. Its subcellular location is the nucleolus. It localises to the nucleoplasm. The protein resides in the PML body. It catalyses the reaction L-lysyl-[protein] + acetyl-CoA = N(6)-acetyl-L-lysyl-[protein] + CoA + H(+). Histone acetyltransferase that acetylates lysine residues in histone H3 and histone H4 (in vitro). Component of the MOZ/MORF complex which has a histone H3 acetyltransferase activity. May act as a transcriptional coactivator for RUNX1 and RUNX2. Acetylates p53/TP53 at 'Lys-120' and 'Lys-382' and controls its transcriptional activity via association with PML. This is Histone acetyltransferase KAT6A (KAT6A) from Homo sapiens (Human).